A 527-amino-acid chain; its full sequence is Transcription initiation factor TFIID subunit 6b (527 aa).

Positions 3–99 (TKESIEVIAQ…NLEPTSGSKS (97 aa)) constitute a Histone-fold domain. Disordered regions lie at residues 410-442 (SPPTSSVWKTNGKLTSPRQSKRKASSDNLTHQP) and 462-492 (MRGTTTVPQQSHTDADARHHNSPSTIAPKTS). 2 stretches are compositionally biased toward polar residues: residues 416-427 (VWKTNGKLTSPR) and 462-473 (MRGTTTVPQQSH).

This sequence belongs to the TAF6 family. Component of the TFIID complex. TFIID is composed of TATA binding protein (TBP) and a number of TBP-associated factors (TAFs) whose MWs range from 14-217 kDa. Interacts with TAF5 and TAF9. Expressed in roots, leaves, inflorescences and siliques.

The protein resides in the nucleus. Its function is as follows. TAFs are components of the transcription factor IID (TFIID) complex that is essential for mediating regulation of RNA polymerase transcription. Not redundant with TAF6. This is Transcription initiation factor TFIID subunit 6b (TAF6B) from Arabidopsis thaliana (Mouse-ear cress).